A 130-amino-acid polypeptide reads, in one-letter code: Protein ApaG (130 aa).

In terms of domain architecture, ApaG spans 3–127; that stretch reads RALTRDIEVV…FSLDSPGLLR (125 aa). A disordered region spans residues 63 to 83; that stretch reads EVTGPGVVGEQPRLSPGDTYE.

The polypeptide is Protein ApaG (Rhizobium etli (strain ATCC 51251 / DSM 11541 / JCM 21823 / NBRC 15573 / CFN 42)).